A 698-amino-acid polypeptide reads, in one-letter code: Zinc finger CCCH domain-containing protein 7 (698 aa).

Over residues 1-11 (MEEPSPVPPAA) the composition is skewed to pro residues. Disordered stretches follow at residues 1–23 (MEEP…PPTT), 56–95 (HAAR…GGDR), 109–137 (APHE…PQGT), and 272–300 (GSLD…SGNS). Composition is skewed to low complexity over residues 12–21 (APASLAAAPP) and 65–74 (EPAAAAAIPP). A compositionally biased stretch (acidic residues) spans 281-300 (EEGEIEGDTQNLDADDSGNS). 3 consecutive C3H1-type zinc fingers follow at residues 429–456 (PKVV…HDTT), 458–485 (LTKS…HELS), and 486–511 (KYPC…HVIP). Disordered stretches follow at residues 512–553 (TAEG…GEPA) and 607–682 (TEKH…QHEV). Polar residues-rich tracts occupy residues 535–548 (CQEQ…STVY) and 665–680 (SLPT…STQH).

This chain is Zinc finger CCCH domain-containing protein 7, found in Oryza sativa subsp. japonica (Rice).